Here is a 103-residue protein sequence, read N- to C-terminus: Salivary thrombin inhibitor anophelin (103 aa).

Residues 1 to 21 (MASKLFVLAFLCLALVVVVQS) form the signal peptide. Positions 24-103 (QYARGDVPTY…PAASSSESDE (80 aa)) are disordered. The blocks exosite I of host thrombin stretch occupies residues 56-68 (EEFDPSLLEEHAD). The tract at residues 74 to 77 (DPGR) is blocks active site cleft of host thrombin in a reverse direction compared to substrates. The span at 91–103 (ASAPAASSSESDE) shows a compositional bias: low complexity.

The protein belongs to the anophelin family. As to quaternary structure, interacts with human F2 (thrombin); the interaction results in thrombin inhibition. As to expression, female salivary gland (at protein level). Not detected in female midgut, head, carcass and male tissues (at protein level).

Its subcellular location is the secreted. Its activity is regulated as follows. Increasing concentration of NaCl decreases affinity for thrombin. In terms of biological role, salivary protein with anticoagulant activity that inhibits host thrombin (F2); binds to the proteinase in a reverse orientation (opposite to substrates). The chain is Salivary thrombin inhibitor anophelin from Anopheles gambiae (African malaria mosquito).